A 486-amino-acid chain; its full sequence is Cytochrome P450 monooxygenase 1 (486 aa).

The first 21 residues, 1-21 (MSHFLPTLILTSLTLVAYVLA), serve as a signal peptide directing secretion. N346 carries an N-linked (GlcNAc...) asparagine glycan. Position 430 (C430) interacts with heme. Residue N434 is glycosylated (N-linked (GlcNAc...) asparagine).

Belongs to the cytochrome P450 family. Heme is required as a cofactor.

It functions in the pathway mycotoxin biosynthesis. In terms of biological role, cytochrome P450 monooxygenase; part of the gene cluster that mediates the biosynthesis of aphidicolin, a specific inhibitor of eukaryotic DNA synthesis and DNA polymerase alpha. The geranylgeranyl pyrophosphate synthase GGS is required for supplying a sufficient amount of geranylgeranyl diphosphate (GGDP), the general precursor of diterpenes. The diterpene synthase ACS then catalyzes the conversion of geranylgeranyl diphosphate to aphidicolan-16-beta-ol via the intermediate syn-copalyldiphosphate (syn-CDP). In addition to aphidicolan-16-beta-ol, the enzyme also produces low levels of amphidicol-15-ene and amphidicol-16-ene. The cytochrome P450 monooxygenase P450-2 then catalyzes the two-step hydroxylation from aphidicolan-16-beta-ol to 3-deoxyaphidicolin via a 17,3-deoxyaphidicolin intermediate. Finally, the cytochrome P450 monooxygenase P450-1 converts 3-deoxyaphidicolin to aphidicolin. The polypeptide is Cytochrome P450 monooxygenase 1 (PbP450-1) (Neocamarosporium betae (Beet black rot fungus)).